A 64-amino-acid polypeptide reads, in one-letter code: Large ribosomal subunit protein bL35c (64 aa).

Belongs to the bacterial ribosomal protein bL35 family.

The protein localises to the plastid. It localises to the chloroplast. The chain is Large ribosomal subunit protein bL35c from Trieres chinensis (Marine centric diatom).